A 106-amino-acid chain; its full sequence is Malonate decarboxylase acyl carrier protein (106 aa).

O-(phosphoribosyl dephospho-coenzyme A)serine is present on serine 28.

Belongs to the MdcC family. In terms of processing, covalently binds the prosthetic group of malonate decarboxylase.

The protein resides in the cytoplasm. Functionally, subunit of malonate decarboxylase, it is an acyl carrier protein to which acetyl and malonyl thioester residues are bound via a 2'-(5''-phosphoribosyl)-3'-dephospho-CoA prosthetic group and turn over during the catalytic mechanism. The polypeptide is Malonate decarboxylase acyl carrier protein (Stenotrophomonas maltophilia (strain R551-3)).